The chain runs to 117 residues: Putative iron-sulfur cluster insertion protein ErpA (117 aa).

Iron-sulfur cluster contacts are provided by Cys45, Cys109, and Cys111.

It belongs to the HesB/IscA family. Homodimer. Requires iron-sulfur cluster as cofactor.

Functionally, required for insertion of 4Fe-4S clusters. This Chromobacterium violaceum (strain ATCC 12472 / DSM 30191 / JCM 1249 / CCUG 213 / NBRC 12614 / NCIMB 9131 / NCTC 9757 / MK) protein is Putative iron-sulfur cluster insertion protein ErpA.